A 449-amino-acid chain; its full sequence is Capsid protein (449 aa).

The interval methionine 1–arginine 43 is DNA-binding. Residues arginine 6–lysine 47 are nuclear localization signals.

This sequence belongs to the gyrovirus capsid protein family. As to quaternary structure, homomultimer (Potential). Interacts with Rep; this interaction relocates Rep into the nucleus.

Its subcellular location is the host nucleus. It localises to the virion. Its function is as follows. Self-assembles to form the virion icosahedral capsid with a T=1 symmetry. This very small capsid (25 nm in diameter) allows the virus to be very stable in the environment and resistant to some disinfectants, including detergents. Essential for the initial attachment to host receptors. After attachment, the virus is endocytosed and traffics to the nucleus. The capsid protein binds and transports the viral genome and Rep across the nuclear envelope. This chain is Capsid protein (VP1), found in Chicken anemia virus (isolate Japan 82-2) (CAV).